The chain runs to 274 residues: Peroxiredoxin-4 (274 aa).

The first 40 residues, 1–40 (MEAPPPPPPLPATTLAPGRSRKLLLLPLLLFLLRAEAVRG), serve as a signal peptide directing secretion. One can recognise a Thioredoxin domain in the interval 82–240 (AKISKPAPYW…TLRLVQAFQY (159 aa)). The active-site Cysteine sulfenic acid (-SOH) intermediate is the cysteine 127.

Belongs to the peroxiredoxin family. AhpC/Prx1 subfamily. In terms of assembly, homodimer; disulfide-linked, upon oxidation. 5 homodimers assemble to form a ring-like decamer. In terms of processing, the enzyme can be inactivated by further oxidation of the cysteine sulfenic acid (C(P)-SOH) to sulphinic acid (C(P)-SO2H) and sulphonic acid (C(P)-SO3H) instead of its condensation to a disulfide bond.

The protein resides in the cytoplasm. Its subcellular location is the endoplasmic reticulum. The catalysed reaction is a hydroperoxide + [thioredoxin]-dithiol = an alcohol + [thioredoxin]-disulfide + H2O. In terms of biological role, thiol-specific peroxidase that catalyzes the reduction of hydrogen peroxide and organic hydroperoxides to water and alcohols, respectively. Plays a role in cell protection against oxidative stress by detoxifying peroxides and as sensor of hydrogen peroxide-mediated signaling events. Regulates the activation of NF-kappa-B in the cytosol by a modulation of I-kappa-B-alpha phosphorylation. The protein is Peroxiredoxin-4 (PRDX4) of Bos taurus (Bovine).